The following is a 689-amino-acid chain: DNA ligase (689 aa).

Residues 40–44 (DSEYD), 89–90 (SL), and glutamate 121 each bind NAD(+). The N6-AMP-lysine intermediate role is filled by lysine 123. Residues arginine 144, glutamate 179, lysine 295, and lysine 319 each contribute to the NAD(+) site. The Zn(2+) site is built by cysteine 413, cysteine 416, cysteine 431, and cysteine 437. Residues 610–689 (REQSGLTDKI…EEWLTLIKNV (80 aa)) enclose the BRCT domain.

The protein belongs to the NAD-dependent DNA ligase family. LigA subfamily. Requires Mg(2+) as cofactor. Mn(2+) is required as a cofactor.

The catalysed reaction is NAD(+) + (deoxyribonucleotide)n-3'-hydroxyl + 5'-phospho-(deoxyribonucleotide)m = (deoxyribonucleotide)n+m + AMP + beta-nicotinamide D-nucleotide.. In terms of biological role, DNA ligase that catalyzes the formation of phosphodiester linkages between 5'-phosphoryl and 3'-hydroxyl groups in double-stranded DNA using NAD as a coenzyme and as the energy source for the reaction. It is essential for DNA replication and repair of damaged DNA. The sequence is that of DNA ligase from Rickettsia conorii (strain ATCC VR-613 / Malish 7).